Consider the following 203-residue polypeptide: Large ribosomal subunit protein bL25 (203 aa).

It belongs to the bacterial ribosomal protein bL25 family. CTC subfamily. As to quaternary structure, part of the 50S ribosomal subunit; part of the 5S rRNA/L5/L18/L25 subcomplex. Contacts the 5S rRNA. Binds to the 5S rRNA independently of L5 and L18.

Functionally, this is one of the proteins that binds to the 5S RNA in the ribosome where it forms part of the central protuberance. The sequence is that of Large ribosomal subunit protein bL25 from Cupriavidus metallidurans (strain ATCC 43123 / DSM 2839 / NBRC 102507 / CH34) (Ralstonia metallidurans).